We begin with the raw amino-acid sequence, 926 residues long: Protein translocase subunit SecA (926 aa).

Residues Q87, 105 to 109, and D512 contribute to the ATP site; that span reads GEGKT. Zn(2+) contacts are provided by C911, C913, C922, and H923.

The protein belongs to the SecA family. As to quaternary structure, monomer and homodimer. Part of the essential Sec protein translocation apparatus which comprises SecA, SecYEG and auxiliary proteins SecDF-YajC and YidC. Zn(2+) serves as cofactor.

It localises to the cell inner membrane. The protein resides in the cytoplasm. The catalysed reaction is ATP + H2O + cellular proteinSide 1 = ADP + phosphate + cellular proteinSide 2.. Part of the Sec protein translocase complex. Interacts with the SecYEG preprotein conducting channel. Has a central role in coupling the hydrolysis of ATP to the transfer of proteins into and across the cell membrane, serving both as a receptor for the preprotein-SecB complex and as an ATP-driven molecular motor driving the stepwise translocation of polypeptide chains across the membrane. This chain is Protein translocase subunit SecA, found in Psychrobacter cryohalolentis (strain ATCC BAA-1226 / DSM 17306 / VKM B-2378 / K5).